We begin with the raw amino-acid sequence, 698 residues long: Polyribonucleotide nucleotidyltransferase (698 aa).

Residues aspartate 490 and aspartate 496 each coordinate Mg(2+). The 60-residue stretch at 557 to 616 (PKVVTMTIKPDKIRDVIGPGGKKINEIIDETGVKLDIEQDGTIFIGAVDQAMINRAREII) folds into the KH domain. Positions 626 to 694 (GQTYQATVKR…KQGRVNASHR (69 aa)) constitute an S1 motif domain.

This sequence belongs to the polyribonucleotide nucleotidyltransferase family. Mg(2+) serves as cofactor.

It is found in the cytoplasm. The catalysed reaction is RNA(n+1) + phosphate = RNA(n) + a ribonucleoside 5'-diphosphate. Involved in mRNA degradation. Catalyzes the phosphorolysis of single-stranded polyribonucleotides processively in the 3'- to 5'-direction. In Staphylococcus aureus (strain Mu3 / ATCC 700698), this protein is Polyribonucleotide nucleotidyltransferase.